The following is a 166-amino-acid chain: Small ribosomal subunit protein uS5 (166 aa).

An S5 DRBM domain is found at 11–74 (LQEKLVAVNR…EQARRNMVKV (64 aa)).

It belongs to the universal ribosomal protein uS5 family. As to quaternary structure, part of the 30S ribosomal subunit. Contacts proteins S4 and S8.

With S4 and S12 plays an important role in translational accuracy. Functionally, located at the back of the 30S subunit body where it stabilizes the conformation of the head with respect to the body. The polypeptide is Small ribosomal subunit protein uS5 (Tolumonas auensis (strain DSM 9187 / NBRC 110442 / TA 4)).